The following is a 499-amino-acid chain: Probable lipid II flippase MurJ (499 aa).

The next 14 membrane-spanning stretches (helical) occupy residues 4 to 24 (LFRA…FGYV), 26 to 46 (DATV…FIAF), 88 to 108 (LLIT…EEII), 130 to 150 (FTIL…ILLV), 154 to 174 (FFVP…SLVI), 184 to 204 (LALA…FLLF), 227 to 247 (FLFT…DTFL), 265 to 285 (IYLL…LALV), 297 to 317 (TALK…FFLS), 335 to 355 (LFYT…YSLQ), 375 to 395 (AFLS…LLNF), 396 to 416 (GVYS…VYLY), 425 to 445 (IPFG…GLVY), and 455 to 475 (FILV…LIIL).

This sequence belongs to the MurJ/MviN family.

The protein resides in the cell inner membrane. It functions in the pathway cell wall biogenesis; peptidoglycan biosynthesis. Its function is as follows. Involved in peptidoglycan biosynthesis. Transports lipid-linked peptidoglycan precursors from the inner to the outer leaflet of the cytoplasmic membrane. In Aquifex aeolicus (strain VF5), this protein is Probable lipid II flippase MurJ.